Consider the following 268-residue polypeptide: Interleukin-1 beta (268 aa).

Residues 1–116 (MATVPELTSE…TWDDYSLECD (116 aa)) constitute a propeptide that is removed on maturation.

Belongs to the IL-1 family. Monomer. In its precursor form, weakly interacts with full-length MEFV; the mature cytokine does not interact at all. Interacts with integrins ITGAV:ITGBV and ITGA5:ITGB1; integrin-binding is required for IL1B signaling. Interacts with cargo receptor TMED10; the interaction is direct and is required for the secretion of IL1B mature form. Interacts with HSP90AB1; the interaction facilitates cargo translocation into the ERGIC. Interacts with HSP90B1; the interaction facilitates cargo translocation into the ERGIC.

The protein resides in the cytoplasm. It is found in the cytosol. It localises to the secreted. The protein localises to the lysosome. Its subcellular location is the extracellular exosome. In terms of biological role, potent pro-inflammatory cytokine. Initially discovered as the major endogenous pyrogen, induces prostaglandin synthesis, neutrophil influx and activation, T-cell activation and cytokine production, B-cell activation and antibody production, and fibroblast proliferation and collagen production. Promotes Th17 differentiation of T-cells. Synergizes with IL12/interleukin-12 to induce IFNG synthesis from T-helper 1 (Th1) cells. Plays a role in angiogenesis by inducing VEGF production synergistically with TNF and IL6. Involved in transduction of inflammation downstream of pyroptosis: its mature form is specifically released in the extracellular milieu by passing through the gasdermin-D (GSDMD) pore. The polypeptide is Interleukin-1 beta (IL1B) (Oryctolagus cuniculus (Rabbit)).